Here is a 339-residue protein sequence, read N- to C-terminus: RNA 3'-terminal phosphate cyclase (339 aa).

Residues Q103 and 283–287 (HLADQ) each bind ATP. H308 functions as the Tele-AMP-histidine intermediate in the catalytic mechanism.

This sequence belongs to the RNA 3'-terminal cyclase family. Type 1 subfamily.

Its subcellular location is the cytoplasm. The enzyme catalyses a 3'-end 3'-phospho-ribonucleotide-RNA + ATP = a 3'-end 2',3'-cyclophospho-ribonucleotide-RNA + AMP + diphosphate. Catalyzes the conversion of 3'-phosphate to a 2',3'-cyclic phosphodiester at the end of RNA. The mechanism of action of the enzyme occurs in 3 steps: (A) adenylation of the enzyme by ATP; (B) transfer of adenylate to an RNA-N3'P to produce RNA-N3'PP5'A; (C) and attack of the adjacent 2'-hydroxyl on the 3'-phosphorus in the diester linkage to produce the cyclic end product. The biological role of this enzyme is unknown but it is likely to function in some aspects of cellular RNA processing. In Salmonella enteritidis PT4 (strain P125109), this protein is RNA 3'-terminal phosphate cyclase.